The primary structure comprises 133 residues: Crossover junction endodeoxyribonuclease Hjc (133 aa).

Residue Glu12 coordinates Mg(2+). Residue Ser32 is part of the active site. The Mg(2+) site is built by Asp36 and Glu49.

It belongs to the Holliday junction resolvase Hjc family. As to quaternary structure, homodimer. Mg(2+) serves as cofactor.

The enzyme catalyses Endonucleolytic cleavage at a junction such as a reciprocal single-stranded crossover between two homologous DNA duplexes (Holliday junction).. In terms of biological role, a structure-specific endonuclease that resolves Holliday junction (HJ) intermediates during genetic recombination. Cleaves 4-way DNA junctions introducing paired nicks in opposing strands, leaving a 5'-terminal phosphate and a 3'-terminal hydroxyl group that are subsequently ligated to produce recombinant products. This chain is Crossover junction endodeoxyribonuclease Hjc, found in Methanocaldococcus jannaschii (strain ATCC 43067 / DSM 2661 / JAL-1 / JCM 10045 / NBRC 100440) (Methanococcus jannaschii).